The following is a 205-amino-acid chain: MAKIGLIDYGMGNIHSVTKALESLEEEIILIKNNHQIKDCKALILPGVGSFDPAINNLSKTELIIDIKNWIKSGKSFLGICLGLQLLFESSDEGTINGLGIVKGQIKKIPQLSDQRIPHVGWCELLPTRKNSLLKVDELNNWVYFVHSYHAVPSNNNLITANVSYGSEKLTAMIERDNLMACQFHPEKSGKTGEKLLRRWIKSIQ.

A Glutamine amidotransferase type-1 domain is found at 3–205 (KIGLIDYGMG…LLRRWIKSIQ (203 aa)). C81 acts as the Nucleophile in catalysis. Residues H185 and E187 contribute to the active site.

Heterodimer of HisH and HisF.

It is found in the cytoplasm. It carries out the reaction 5-[(5-phospho-1-deoxy-D-ribulos-1-ylimino)methylamino]-1-(5-phospho-beta-D-ribosyl)imidazole-4-carboxamide + L-glutamine = D-erythro-1-(imidazol-4-yl)glycerol 3-phosphate + 5-amino-1-(5-phospho-beta-D-ribosyl)imidazole-4-carboxamide + L-glutamate + H(+). The catalysed reaction is L-glutamine + H2O = L-glutamate + NH4(+). The protein operates within amino-acid biosynthesis; L-histidine biosynthesis; L-histidine from 5-phospho-alpha-D-ribose 1-diphosphate: step 5/9. Functionally, IGPS catalyzes the conversion of PRFAR and glutamine to IGP, AICAR and glutamate. The HisH subunit catalyzes the hydrolysis of glutamine to glutamate and ammonia as part of the synthesis of IGP and AICAR. The resulting ammonia molecule is channeled to the active site of HisF. This chain is Imidazole glycerol phosphate synthase subunit HisH, found in Prochlorococcus marinus subsp. pastoris (strain CCMP1986 / NIES-2087 / MED4).